A 226-amino-acid chain; its full sequence is Small ribosomal subunit protein uS3 (226 aa).

One can recognise a KH type-2 domain in the interval 39-107 (IRKFIKNKLY…NILINITEIK (69 aa)).

Belongs to the universal ribosomal protein uS3 family. In terms of assembly, part of the 30S ribosomal subunit. Forms a tight complex with proteins S10 and S14.

Binds the lower part of the 30S subunit head. Binds mRNA in the 70S ribosome, positioning it for translation. This chain is Small ribosomal subunit protein uS3, found in Acetivibrio thermocellus (strain ATCC 27405 / DSM 1237 / JCM 9322 / NBRC 103400 / NCIMB 10682 / NRRL B-4536 / VPI 7372) (Clostridium thermocellum).